A 550-amino-acid chain; its full sequence is Thermosome subunit (550 aa).

The segment at 529–550 (KEKEGEKGGGGSEDFSSSSDLD) is disordered. Positions 541–550 (EDFSSSSDLD) are enriched in low complexity.

Belongs to the TCP-1 chaperonin family. As to quaternary structure, forms an oligomeric complex of eight-membered rings.

Molecular chaperone; binds unfolded polypeptides in vitro, and has a weak ATPase activity. This is Thermosome subunit (ths) from Pyrococcus abyssi (strain GE5 / Orsay).